The following is a 194-amino-acid chain: Orotate phosphoribosyltransferase (194 aa).

117 to 125 (EDIVTTGLS) is a binding site for 5-phospho-alpha-D-ribose 1-diphosphate. The orotate site is built by threonine 121 and arginine 149.

It belongs to the purine/pyrimidine phosphoribosyltransferase family. PyrE subfamily. In terms of assembly, homodimer. Mg(2+) serves as cofactor.

The enzyme catalyses orotidine 5'-phosphate + diphosphate = orotate + 5-phospho-alpha-D-ribose 1-diphosphate. It functions in the pathway pyrimidine metabolism; UMP biosynthesis via de novo pathway; UMP from orotate: step 1/2. Its function is as follows. Catalyzes the transfer of a ribosyl phosphate group from 5-phosphoribose 1-diphosphate to orotate, leading to the formation of orotidine monophosphate (OMP). This chain is Orotate phosphoribosyltransferase, found in Parvibaculum lavamentivorans (strain DS-1 / DSM 13023 / NCIMB 13966).